Consider the following 120-residue polypeptide: Probable non-functional immunoglobulin kappa variable 2D-24 (120 aa).

Residues 1–19 (MRLLAQLLGLLMLWVPGSS) form the signal peptide. Residues 20-120 (GDIVMTQTPL…YYCTQATQFP (101 aa)) form the Ig-like domain. Residues 21 to 43 (DIVMTQTPLSSPVTLGQPASISF) are framework-1. A complementarity-determining-1 region spans residues 44–59 (RSSQSLVHSDGNTYLS). The framework-2 stretch occupies residues 60-74 (WLQQRPGQPPRLLIY). The segment at 75–81 (KVSNRFS) is complementarity-determining-2. The framework-3 stretch occupies residues 82-113 (GVPDRFSGSGAGTDFTLKISRVEAEDVGVYYC). The tract at residues 114–120 (TQATQFP) is complementarity-determining-3.

As to quaternary structure, most probably, the immunoglobulin is not assembled due to incorrect folding of light chain. Immunoglobulins are composed of two identical heavy chains and two identical light chains; disulfide-linked.

The protein resides in the secreted. The protein localises to the cell membrane. Probable non-functional open reading frame (ORF) of V region of the variable domain of immunoglobulin light chains. Non-functional ORF generally cannot participate in the synthesis of a productive immunoglobulin chain due to altered V-(D)-J or switch recombination and/or splicing site (at mRNA level) and/or conserved amino acid change (protein level). Immunoglobulins, also known as antibodies, are membrane-bound or secreted glycoproteins produced by B lymphocytes. In the recognition phase of humoral immunity, the membrane-bound immunoglobulins serve as receptors which, upon binding of a specific antigen, trigger the clonal expansion and differentiation of B lymphocytes into immunoglobulins-secreting plasma cells. Secreted immunoglobulins mediate the effector phase of humoral immunity, which results in the elimination of bound antigens. The antigen binding site is formed by the variable domain of one heavy chain, together with that of its associated light chain. Thus, each immunoglobulin has two antigen binding sites with remarkable affinity for a particular antigen. The variable domains are assembled by a process called V-(D)-J rearrangement and can then be subjected to somatic hypermutations which, after exposure to antigen and selection, allow affinity maturation for a particular antigen. The protein is Probable non-functional immunoglobulin kappa variable 2D-24 of Homo sapiens (Human).